A 210-amino-acid polypeptide reads, in one-letter code: MDNDKYLKGTTTVGVVCTDGIVLASEQRATMGHFIASKTAKKVYQIDDLVGMTTAGSVGDAQQLVRLVSVESQLYKMRRDESMTIKGITTLMSNFLSRNRYYPMMVQLLIGGVDKNGPGIYSLDAMGGSIEETRISATGSGSPMAYGVLEDQYRENMTVKEGLDLAIRAIHNATKRDSASGENIDVVVITKEAFKRLDPEEVKSRRALLN.

Positions methionine 1 to glycine 9 are cleaved as a propeptide — removed in mature form; by autocatalysis. Residue threonine 10 is the Nucleophile of the active site.

Belongs to the peptidase T1B family. As to quaternary structure, the 20S proteasome core is composed of 14 alpha and 14 beta subunits that assemble into four stacked heptameric rings, resulting in a barrel-shaped structure. The two inner rings, each composed of seven catalytic beta subunits, are sandwiched by two outer rings, each composed of seven alpha subunits. The catalytic chamber with the active sites is on the inside of the barrel. Has a gated structure, the ends of the cylinder being occluded by the N-termini of the alpha-subunits. Is capped at one or both ends by the proteasome regulatory ATPase, PAN.

The protein localises to the cytoplasm. It carries out the reaction Cleavage of peptide bonds with very broad specificity.. The formation of the proteasomal ATPase PAN-20S proteasome complex, via the docking of the C-termini of PAN into the intersubunit pockets in the alpha-rings, triggers opening of the gate for substrate entry. Interconversion between the open-gate and close-gate conformations leads to a dynamic regulation of the 20S proteasome proteolysis activity. Component of the proteasome core, a large protease complex with broad specificity involved in protein degradation. In Methanosarcina thermophila, this protein is Proteasome subunit beta.